The chain runs to 341 residues: Anthranilate phosphoribosyltransferase (341 aa).

5-phospho-alpha-D-ribose 1-diphosphate is bound by residues G79, 82–83 (GD), T87, 89–92 (NIST), 107–115 (KHGNRAASS), and A119. G79 provides a ligand contact to anthranilate. Residue S91 participates in Mg(2+) binding. N110 is an anthranilate binding site. Anthranilate is bound at residue R165. The Mg(2+) site is built by D224 and E225.

This sequence belongs to the anthranilate phosphoribosyltransferase family. In terms of assembly, homodimer. Mg(2+) is required as a cofactor.

It carries out the reaction N-(5-phospho-beta-D-ribosyl)anthranilate + diphosphate = 5-phospho-alpha-D-ribose 1-diphosphate + anthranilate. It functions in the pathway amino-acid biosynthesis; L-tryptophan biosynthesis; L-tryptophan from chorismate: step 2/5. Its function is as follows. Catalyzes the transfer of the phosphoribosyl group of 5-phosphorylribose-1-pyrophosphate (PRPP) to anthranilate to yield N-(5'-phosphoribosyl)-anthranilate (PRA). The polypeptide is Anthranilate phosphoribosyltransferase (Lacticaseibacillus paracasei (strain ATCC 334 / BCRC 17002 / CCUG 31169 / CIP 107868 / KCTC 3260 / NRRL B-441) (Lactobacillus paracasei)).